Consider the following 237-residue polypeptide: UPF0502 protein RB6530 (237 aa).

Residues 187–202 (ASSAAPSQAESGSTSP) are compositionally biased toward polar residues. Residues 187-211 (ASSAAPSQAESGSTSPAKAANDDRI) are disordered.

This sequence belongs to the UPF0502 family.

The sequence is that of UPF0502 protein RB6530 from Rhodopirellula baltica (strain DSM 10527 / NCIMB 13988 / SH1).